Here is a 231-residue protein sequence, read N- to C-terminus: Heptaprenylglyceryl phosphate synthase (231 aa).

Position 12 (Lys-12) interacts with sn-glycerol 1-phosphate. Mg(2+) is bound by residues Asp-14 and Thr-40. Sn-glycerol 1-phosphate is bound by residues 159–164, Gly-189, and 209–210; these read YMEYSG and GN.

Belongs to the GGGP/HepGP synthase family. Group I subfamily. As to quaternary structure, homodimer. The cofactor is Mg(2+).

The catalysed reaction is sn-glycerol 1-phosphate + all-trans-heptaprenyl diphosphate = 3-heptaprenyl-sn-glycero-1-phosphate + diphosphate. It functions in the pathway membrane lipid metabolism; glycerophospholipid metabolism. Its function is as follows. Prenyltransferase that catalyzes in vivo the transfer of the heptaprenyl moiety of heptaprenyl pyrophosphate (HepPP; 35 carbon atoms) to the C3 hydroxyl of sn-glycerol-1-phosphate (G1P), producing heptaprenylglyceryl phosphate (HepGP). This reaction is an ether-bond-formation step in the biosynthesis of archaea-type G1P-based membrane lipids found in Bacillales. In Anoxybacillus flavithermus (strain DSM 21510 / WK1), this protein is Heptaprenylglyceryl phosphate synthase.